The sequence spans 360 residues: S-adenosylmethionine:tRNA ribosyltransferase-isomerase (360 aa).

Belongs to the QueA family. As to quaternary structure, monomer.

Its subcellular location is the cytoplasm. It catalyses the reaction 7-aminomethyl-7-carbaguanosine(34) in tRNA + S-adenosyl-L-methionine = epoxyqueuosine(34) in tRNA + adenine + L-methionine + 2 H(+). It functions in the pathway tRNA modification; tRNA-queuosine biosynthesis. Its function is as follows. Transfers and isomerizes the ribose moiety from AdoMet to the 7-aminomethyl group of 7-deazaguanine (preQ1-tRNA) to give epoxyqueuosine (oQ-tRNA). This is S-adenosylmethionine:tRNA ribosyltransferase-isomerase from Rhodopseudomonas palustris (strain BisB5).